A 344-amino-acid polypeptide reads, in one-letter code: Glycerol-3-phosphate dehydrogenase [NAD(P)+] (344 aa).

S11, W12, H32, R33, and K105 together coordinate NADPH. Residues K105, G135, and S137 each coordinate sn-glycerol 3-phosphate. NADPH is bound at residue A139. The sn-glycerol 3-phosphate site is built by K190, D243, S253, R254, and N255. Catalysis depends on K190, which acts as the Proton acceptor. Position 254 (R254) interacts with NADPH. V278 and E280 together coordinate NADPH.

The protein belongs to the NAD-dependent glycerol-3-phosphate dehydrogenase family.

It is found in the cytoplasm. The enzyme catalyses sn-glycerol 3-phosphate + NAD(+) = dihydroxyacetone phosphate + NADH + H(+). The catalysed reaction is sn-glycerol 3-phosphate + NADP(+) = dihydroxyacetone phosphate + NADPH + H(+). It functions in the pathway membrane lipid metabolism; glycerophospholipid metabolism. Functionally, catalyzes the reduction of the glycolytic intermediate dihydroxyacetone phosphate (DHAP) to sn-glycerol 3-phosphate (G3P), the key precursor for phospholipid synthesis. This Oceanobacillus iheyensis (strain DSM 14371 / CIP 107618 / JCM 11309 / KCTC 3954 / HTE831) protein is Glycerol-3-phosphate dehydrogenase [NAD(P)+].